We begin with the raw amino-acid sequence, 426 residues long: Glutamate-1-semialdehyde 2,1-aminomutase (426 aa).

Lys265 bears the N6-(pyridoxal phosphate)lysine mark.

It belongs to the class-III pyridoxal-phosphate-dependent aminotransferase family. HemL subfamily. In terms of assembly, homodimer. Requires pyridoxal 5'-phosphate as cofactor.

It localises to the cytoplasm. The enzyme catalyses (S)-4-amino-5-oxopentanoate = 5-aminolevulinate. It participates in porphyrin-containing compound metabolism; protoporphyrin-IX biosynthesis; 5-aminolevulinate from L-glutamyl-tRNA(Glu): step 2/2. This is Glutamate-1-semialdehyde 2,1-aminomutase from Hydrogenovibrio crunogenus (strain DSM 25203 / XCL-2) (Thiomicrospira crunogena).